The chain runs to 112 residues: Nitrogen regulatory protein P-II (112 aa).

Position 49 is a phosphoserine (Ser49). Tyr51 bears the O-UMP-tyrosine mark.

It belongs to the P(II) protein family. As to quaternary structure, homotrimer. Post-translationally, phosphorylation dependent on the nitrogen source and spectral light quality.

Its function is as follows. P-II indirectly controls the transcription of the GS gene (glnA). P-II prevents NR-II-catalyzed conversion of NR-I to NR-I-phosphate, the transcriptional activator of glnA. When P-II is phosphorylated, these events are reversed. In nitrogen-limiting conditions, when the ratio of Gln to 2-ketoglutarate decreases, P-II is phosphorylated which allows the deadenylation of glutamine synthetase (GS), thus activating the enzyme. The chain is Nitrogen regulatory protein P-II (glnB) from Microchaete diplosiphon (Fremyella diplosiphon).